A 344-amino-acid polypeptide reads, in one-letter code: Golgi-associated RAB2 interactor protein 1B (344 aa).

A disordered region spans residues 271 to 293; it reads FRSSRKVETNKNSSGKDSSREDS.

Belongs to the GARIN family.

It localises to the golgi apparatus. Its function is as follows. RAB2B effector protein required for accurate acrosome formation and normal male fertility. In complex with RAB2A/RAB2B, seems to suppress excessive vesicle trafficking during acrosome formation. The chain is Golgi-associated RAB2 interactor protein 1B from Homo sapiens (Human).